A 25-amino-acid chain; its full sequence is Large ribosomal subunit protein uL29 (25 aa).

The protein belongs to the universal ribosomal protein uL29 family.

This is Large ribosomal subunit protein uL29 (rpmC) from Brevundimonas vesicularis (Pseudomonas vesicularis).